We begin with the raw amino-acid sequence, 291 residues long: MAGTKEIRTKIKSVQNTRKITKAMEMVAASKMRKAQERMRNARPYAEKVRNIAAHLASANPEFKHPFMQEREVKRVGMIVVTTDKGLCGGLNTNVLRAVTNELKTLQGRGVDVQATAIGGKGMQFLSRIGAKVVSNVVQLGDTPHLEKLIGAIKVQLDAFTNGEVDAVYLSYTRFINTMKQEPMVEQLLPLAADKLAQTEEEKRAYSWDYIYEPDAQTVVEDLLVRYVEALVYQAVAENMASEQSARMVAMKAASDNAKNVIGELQLDYNKTRQAAITKELSEIVSGAAAV.

This sequence belongs to the ATPase gamma chain family. As to quaternary structure, F-type ATPases have 2 components, CF(1) - the catalytic core - and CF(0) - the membrane proton channel. CF(1) has five subunits: alpha(3), beta(3), gamma(1), delta(1), epsilon(1). CF(0) has three main subunits: a, b and c.

Its subcellular location is the cell inner membrane. Functionally, produces ATP from ADP in the presence of a proton gradient across the membrane. The gamma chain is believed to be important in regulating ATPase activity and the flow of protons through the CF(0) complex. The protein is ATP synthase gamma chain of Cupriavidus pinatubonensis (strain JMP 134 / LMG 1197) (Cupriavidus necator (strain JMP 134)).